We begin with the raw amino-acid sequence, 160 residues long: Cytochrome b6-f complex subunit 4 (160 aa).

A run of 3 helical transmembrane segments spans residues 36–56 (LLYI…GLAV), 95–115 (LLGV…PFLE), and 131–151 (TVFL…TLPI).

It belongs to the cytochrome b family. PetD subfamily. As to quaternary structure, the 4 large subunits of the cytochrome b6-f complex are cytochrome b6, subunit IV (17 kDa polypeptide, petD), cytochrome f and the Rieske protein, while the 4 small subunits are petG, petL, petM and petN. The complex functions as a dimer.

It is found in the plastid. It localises to the chloroplast thylakoid membrane. In terms of biological role, component of the cytochrome b6-f complex, which mediates electron transfer between photosystem II (PSII) and photosystem I (PSI), cyclic electron flow around PSI, and state transitions. This chain is Cytochrome b6-f complex subunit 4, found in Lotus japonicus (Lotus corniculatus var. japonicus).